The following is a 380-amino-acid chain: Cytochrome b (380 aa).

The next 4 helical transmembrane spans lie at Phe34–Met54, Trp78–Ile99, Trp114–Leu134, and Phe179–Leu199. Heme b-binding residues include His84 and His98. His183 and His197 together coordinate heme b. His202 serves as a coordination point for a ubiquinone. Helical transmembrane passes span Tyr227–Leu247, Leu289–His309, Phe321–Ala341, and Phe348–Pro368.

It belongs to the cytochrome b family. The cytochrome bc1 complex contains 3 respiratory subunits (MT-CYB, CYC1 and UQCRFS1), 2 core proteins (UQCRC1 and UQCRC2) and probably 6 low-molecular weight proteins. It depends on heme b as a cofactor.

It is found in the mitochondrion inner membrane. Component of the ubiquinol-cytochrome c reductase complex (complex III or cytochrome b-c1 complex) that is part of the mitochondrial respiratory chain. The b-c1 complex mediates electron transfer from ubiquinol to cytochrome c. Contributes to the generation of a proton gradient across the mitochondrial membrane that is then used for ATP synthesis. In Pelomedusa subrufa (African side-necked turtle), this protein is Cytochrome b (MT-CYB).